The following is a 332-amino-acid chain: Autoinducer 2 import system permease protein LsrD (332 aa).

10 consecutive transmembrane segments (helical) span residues 7 to 27, 45 to 65, 70 to 90, 91 to 111, 118 to 138, 162 to 182, 216 to 236, 240 to 260, 261 to 281, and 288 to 308; these read YSWE…FGVI, ICIG…GMDI, TIGL…PLPL, AIII…GLII, LVIT…LSGM, FLGI…FWLL, VYAM…SYFG, SDLG…GGAN, IYGG…VGFL, and AGVP…VVVV.

Belongs to the binding-protein-dependent transport system permease family. AraH/RbsC subfamily. As to quaternary structure, the complex is composed of two ATP-binding proteins (LsrA), two transmembrane proteins (LsrC and LsrD) and a solute-binding protein (LsrB).

The protein localises to the cell inner membrane. Part of the ABC transporter complex LsrABCD involved in autoinducer 2 (AI-2) import. Probably responsible for the translocation of the substrate across the membrane. This chain is Autoinducer 2 import system permease protein LsrD (lsrD), found in Salmonella paratyphi A (strain ATCC 9150 / SARB42).